A 161-amino-acid chain; its full sequence is Anther-specific protein LAT52 (161 aa).

The N-terminal stretch at 1–17 (MAKAIVLLSALCILALA) is a signal peptide. Intrachain disulfides connect C35–C106, C38–C147, and C59–C94. Residue N61 is glycosylated (N-linked (GlcNAc...) asparagine).

It belongs to the Ole e I family. As to expression, expressed in anthers and pollen.

Functionally, may play a role during germination or early tube growth. The chain is Anther-specific protein LAT52 (LAT52) from Solanum lycopersicum (Tomato).